A 338-amino-acid chain; its full sequence is Replication factor C small subunit (338 aa).

Residue 53–60 (GPPGVGKT) participates in ATP binding.

It belongs to the activator 1 small subunits family. RfcS subfamily. As to quaternary structure, heteromultimer composed of small subunits (RfcS) and large subunits (RfcL).

Part of the RFC clamp loader complex which loads the PCNA sliding clamp onto DNA. The sequence is that of Replication factor C small subunit from Methanosarcina mazei (strain ATCC BAA-159 / DSM 3647 / Goe1 / Go1 / JCM 11833 / OCM 88) (Methanosarcina frisia).